The following is a 367-amino-acid chain: Peptide chain release factor 2 (367 aa).

Gln254 is subject to N5-methylglutamine.

It belongs to the prokaryotic/mitochondrial release factor family. In terms of processing, methylated by PrmC. Methylation increases the termination efficiency of RF2.

The protein resides in the cytoplasm. Peptide chain release factor 2 directs the termination of translation in response to the peptide chain termination codons UGA and UAA. The sequence is that of Peptide chain release factor 2 from Burkholderia cenocepacia (strain ATCC BAA-245 / DSM 16553 / LMG 16656 / NCTC 13227 / J2315 / CF5610) (Burkholderia cepacia (strain J2315)).